A 32-amino-acid polypeptide reads, in one-letter code: Cytochrome b6-f complex subunit 7 (32 aa).

The chain crosses the membrane as a helical span at residues 9–27 (AAVFWVLIPVGLLGGAILL).

This sequence belongs to the PetM family. The 4 large subunits of the cytochrome b6-f complex are cytochrome b6, subunit IV (17 kDa polypeptide, PetD), cytochrome f and the Rieske protein, while the 4 small subunits are PetG, PetL, PetM and PetN. The complex functions as a dimer.

The protein resides in the cellular thylakoid membrane. In terms of biological role, component of the cytochrome b6-f complex, which mediates electron transfer between photosystem II (PSII) and photosystem I (PSI), cyclic electron flow around PSI, and state transitions. This is Cytochrome b6-f complex subunit 7 from Prochlorococcus marinus (strain MIT 9211).